A 64-amino-acid polypeptide reads, in one-letter code: Large ribosomal subunit protein bL35 (64 aa).

Belongs to the bacterial ribosomal protein bL35 family.

In Pseudomonas putida (strain W619), this protein is Large ribosomal subunit protein bL35.